A 277-amino-acid chain; its full sequence is Diaminopimelate epimerase (277 aa).

The substrate site is built by asparagine 11 and asparagine 62. Cysteine 71 functions as the Proton donor in the catalytic mechanism. Residues glycine 72–asparagine 73, asparagine 160, asparagine 193, and glutamate 211–arginine 212 each bind substrate. Cysteine 220 acts as the Proton acceptor in catalysis. Position 221–222 (glycine 221–threonine 222) interacts with substrate.

Belongs to the diaminopimelate epimerase family. Homodimer.

Its subcellular location is the cytoplasm. It catalyses the reaction (2S,6S)-2,6-diaminopimelate = meso-2,6-diaminopimelate. It participates in amino-acid biosynthesis; L-lysine biosynthesis via DAP pathway; DL-2,6-diaminopimelate from LL-2,6-diaminopimelate: step 1/1. Functionally, catalyzes the stereoinversion of LL-2,6-diaminopimelate (L,L-DAP) to meso-diaminopimelate (meso-DAP), a precursor of L-lysine. The chain is Diaminopimelate epimerase from Methanococcus maripaludis (strain C5 / ATCC BAA-1333).